Consider the following 414-residue polypeptide: MNELLEKAERLKTASQTLAMLSTEEKNAALEQIAKAIDRKRAVILAENEKDMAAGRSQGLSPALLDRLQLTNERIDQIISGVRQVASLPDPVGDIIEEWTRPNGLRIQTVRVPLGVIGMVYEARPNVTVDAVSLCLKTGNAVLLRGSSSALHSNKALVSVMKEALRTTAIPETAIELLEDTSRETAQRMFRLNDYLDVLIPRGGAGLIRSVVENATVPVLETGVGNCHIFVDESAERSMAIDIVLNAKLQRPSVCNAIETVLIHERWPYVGELLEALHARGVELRGDRRLAAAYPFVTEATEEDWHTEYLAPILAIKLVTDVDEAIQHIHRYGTKHSEAIITENEAHVRRFFQAVDAAVLYHNASTRFTDGEQFGYGAEIGISTQKLHARGPMGLVAITTTKSLVYGTGQIRTV.

It belongs to the gamma-glutamyl phosphate reductase family.

The protein resides in the cytoplasm. It carries out the reaction L-glutamate 5-semialdehyde + phosphate + NADP(+) = L-glutamyl 5-phosphate + NADPH + H(+). It participates in amino-acid biosynthesis; L-proline biosynthesis; L-glutamate 5-semialdehyde from L-glutamate: step 2/2. In terms of biological role, catalyzes the NADPH-dependent reduction of L-glutamate 5-phosphate into L-glutamate 5-semialdehyde and phosphate. The product spontaneously undergoes cyclization to form 1-pyrroline-5-carboxylate. The sequence is that of Gamma-glutamyl phosphate reductase from Geobacillus thermodenitrificans (strain NG80-2).